The sequence spans 148 residues: Large ribosomal subunit protein bL9 (148 aa).

The protein belongs to the bacterial ribosomal protein bL9 family.

Binds to the 23S rRNA. The sequence is that of Large ribosomal subunit protein bL9 from Geobacter sulfurreducens (strain ATCC 51573 / DSM 12127 / PCA).